The sequence spans 1985 residues: Non-reducing polyketide synthase ntnG (1985 aa).

Positions 7-243 are N-terminal acylcarrier protein transacylase (SAT) domain; the sequence is LLFGDQADAP…TILPAFGAVH (237 aa). The Ketosynthase family 3 (KS3) domain occupies 364 to 792; that stretch reads SGSVAIIGMS…GGNSCFVLEE (429 aa). Residues Cys536, His671, and His711 each act as for beta-ketoacyl synthase activity in the active site. The malonyl-CoA:ACP transacylase (MAT) domain stretch occupies residues 889-1148; sequence VFAFTGQGAH…VNFEQAISHC (260 aa). Ser980 serves as the catalytic For acyl/malonyl transferase activity. The segment at 1261–1392 is N-terminal hotdog fold; it reads HRLVKQEDTA…VRLRDEHAFD (132 aa). A PKS/mFAS DH domain is found at 1261–1567; it reads HRLVKQEDTA…FRKMPRTTLH (307 aa). Positions 1265–1566 are product template (PT) domain; that stretch reads KQEDTAKEQH…RFRKMPRTTL (302 aa). His1293 (proton acceptor; for dehydratase activity) is an active-site residue. The segment at 1414-1567 is C-terminal hotdog fold; that stretch reads AGGRANRFQG…FRKMPRTTLH (154 aa). Asp1479 acts as the Proton donor; for dehydratase activity in catalysis. Residues 1578–1605 are compositionally biased toward polar residues; the sequence is NTKQVPHPTTNGSAIANGVNRNPSHNEP. The tract at residues 1578–1622 is disordered; it reads NTKQVPHPTTNGSAIANGVNRNPSHNEPSTPPVANGVNGTNGDQS. Residues 1622 to 1699 enclose the Carrier domain; sequence SDRKSLYSVL…DAQRELRRLE (78 aa). Ser1659 carries the post-translational modification O-(pantetheine 4'-phosphoryl)serine. The segment at 1719–1913 is thioesterase (TE) domain; it reads TRECNVVLMQ…DCTFVIWAKK (195 aa).

It functions in the pathway secondary metabolite biosynthesis; terpenoid biosynthesis. Non-reducing polyketide synthase; part of the gene cluster that mediates the biosynthesis of the meroterpenoids nectripenoids A and B, as well as cochliquninone D and isocochliquninone E. The pathway probably begins with the HR-PKS ntnH that catalyzes two chain-extension steps to form a reduced triketide, which then primes the SAT domain in the NR-PKS ntnG to initiate three more cycles of extension to give a linear hexaketide corresponding to the polyketide part of nectripenoids. The FAD-dependent monooxygenase ntnJ then performs an oxidative decarboxylation at C11 of the ntnH/ntnG product, via an electrophilic aromatic hydroxylation with concomitant ipso-decarboxylation. The membrane-bound polyprenyl transferase ntnF then introduces a farnesyl group before the FAD-dependent monooxygenase ntnK functions as the first epoxidase on terminal C12'-C13' olefin, followed by a second epoxidation on C7'-C8' catalyzed by ntnA. The terpene cyclase/mutase ntnI then initiates the sequential tricyclic ring formation through protonation of the terminal epoxide and catalyzes the regioselective and stereoselective 6/6/6-tricyclic ring formation. The cytochrome P450 monooxygenase ntnM may then hydroxylate C1'. The polypeptide is Non-reducing polyketide synthase ntnG (Nectria sp).